A 261-amino-acid chain; its full sequence is Esterase citA (261 aa).

Catalysis depends on charge relay system residues serine 122, aspartate 207, and histidine 235.

The protein belongs to the LovG family.

The protein operates within mycotoxin biosynthesis. Functionally, non-reducing polyketide synthase; part of the gene cluster that mediates the biosynthesis of the mycotoxin citrinin, a hepato-nephrotoxic compound to humans due to inhibition of respiration complex III. The pathway begins with the synthesis of a keto-aldehyde intermediate by the citrinin PKS (pksCT also named citS) from successive condensations of 4 malonyl-CoA units, presumably with a simple acetyl-CoA starter unit. Release of the keto-aldehyde intermediate is consistent with the presence of the C-terminal reductive release domain. CitA collaborates with citS by catalyzing the hydrolysis of ACP-bound acyl intermediates to free the ACP from stalled intermediates. CitB then catalyzes the oxidation of the C-12 methyl of the ketone intermediate to an alcohol intermediate which is further oxidized by the oxidoreductase citC to produce a bisaldehyde intermediate. The fourth catalytic step is catalyzed by the citD aldehyde dehydrogenase. The final transformation is the reduction of C-3 by citE to provide the chemically stable citrinin nucleus. CitE appears highly selective for its substrate as its presence in any context other than a full complement of citS and citA-D does not result in observable new compounds. This is Esterase citA from Monascus ruber (Mold).